The following is a 505-amino-acid chain: Putative thymidine phosphorylase (505 aa).

This sequence belongs to the thymidine/pyrimidine-nucleoside phosphorylase family. Type 2 subfamily.

The catalysed reaction is thymidine + phosphate = 2-deoxy-alpha-D-ribose 1-phosphate + thymine. The protein is Putative thymidine phosphorylase of Hahella chejuensis (strain KCTC 2396).